A 62-amino-acid chain; its full sequence is Prokaryotic ubiquitin-like protein Pup 2 (62 aa).

Positions methionine 1–threonine 34 are disordered. Residues proline 21 to tyrosine 56 are ARC ATPase binding. An Isoglutamyl lysine isopeptide (Glu-Lys) (interchain with K-? in acceptor proteins) cross-link involves residue glutamate 62.

The protein belongs to the prokaryotic ubiquitin-like protein family. As to quaternary structure, strongly interacts with the proteasome-associated ATPase ARC through a hydrophobic interface; the interacting region of Pup lies in its C-terminal half. There is one Pup binding site per ARC hexamer ring.

The protein operates within protein degradation; proteasomal Pup-dependent pathway. Protein modifier that is covalently attached to lysine residues of substrate proteins, thereby targeting them for proteasomal degradation. The tagging system is termed pupylation. This Saccharopolyspora erythraea (strain ATCC 11635 / DSM 40517 / JCM 4748 / NBRC 13426 / NCIMB 8594 / NRRL 2338) protein is Prokaryotic ubiquitin-like protein Pup 2.